A 509-amino-acid chain; its full sequence is Probable Xaa-Pro aminopeptidase MAC_04092 (509 aa).

Asp273, Asp284, Glu437, and Glu478 together coordinate Mn(2+).

This sequence belongs to the peptidase M24B family. The cofactor is Mn(2+).

It catalyses the reaction Release of any N-terminal amino acid, including proline, that is linked to proline, even from a dipeptide or tripeptide.. In terms of biological role, catalyzes the removal of a penultimate prolyl residue from the N-termini of peptides. The protein is Probable Xaa-Pro aminopeptidase MAC_04092 of Metarhizium acridum (strain CQMa 102).